The primary structure comprises 387 residues: 3-ketoacyl-CoA thiolase (387 aa).

Cys-91 functions as the Acyl-thioester intermediate in the catalytic mechanism. Catalysis depends on proton acceptor residues His-343 and Cys-373.

Belongs to the thiolase-like superfamily. Thiolase family. Heterotetramer of two alpha chains (FadB) and two beta chains (FadA).

The protein resides in the cytoplasm. It carries out the reaction an acyl-CoA + acetyl-CoA = a 3-oxoacyl-CoA + CoA. It functions in the pathway lipid metabolism; fatty acid beta-oxidation. Catalyzes the final step of fatty acid oxidation in which acetyl-CoA is released and the CoA ester of a fatty acid two carbons shorter is formed. The sequence is that of 3-ketoacyl-CoA thiolase from Erwinia tasmaniensis (strain DSM 17950 / CFBP 7177 / CIP 109463 / NCPPB 4357 / Et1/99).